The chain runs to 824 residues: ATP-dependent RNA helicase drs1 (824 aa).

Residues 1-305 are disordered; sequence MAGTKKRANA…EEKTSESAMA (305 aa). Acidic residues-rich tracts occupy residues 11–37 and 90–108; these read DDDF…EGDD and QEEE…EDDG. The span at 137–166 shows a compositional bias: basic and acidic residues; sequence EEGKGGDKKAVDIDDIISRRQAKKEAELIR. Composition is skewed to acidic residues over residues 178–203, 212–257, and 273–284; these read EFSE…ELLA, DGEE…DDDS, and DSDEESQVDAEE. Residues 285 to 305 show a composition bias toward basic and acidic residues; the sequence is EEKRKAFFAPEEEKTSESAMA. The short motif at 309–337 is the Q motif element; it reads RSFQEFNLSRPILRGLAGVNFSNPTPIQR. The region spanning 340–514 is the Helicase ATP-binding domain; the sequence is IPVALLGKDI…RVGLNRPVRL (175 aa). 353–360 contacts ATP; the sequence is AVTGSGKT. Residues 462 to 465 carry the DEAD box motif; that stretch reads DEAD. Residues 541–685 enclose the Helicase C-terminal domain; that stretch reads RLGYLLYLCK…KIASRVIEPA (145 aa). Basic and acidic residues-rich tracts occupy residues 739-749 and 767-790; these read KRTWFETERDK and MSKK…RQRQ. Residues 739-824 are disordered; the sequence is KRTWFETERD…KKDNKKKGKK (86 aa).

This sequence belongs to the DEAD box helicase family. DDX27/DRS1 subfamily. As to quaternary structure, associates with pre-ribosomal particles.

The protein resides in the nucleus. It is found in the nucleolus. It catalyses the reaction ATP + H2O = ADP + phosphate + H(+). Its function is as follows. ATP-binding RNA helicase involved in ribosome assembly. The sequence is that of ATP-dependent RNA helicase drs1 (drs1) from Aspergillus niger (strain ATCC MYA-4892 / CBS 513.88 / FGSC A1513).